The sequence spans 486 residues: Serralysin (486 aa).

Position 187 (histidine 187) interacts with Zn(2+). Glutamate 188 is an active-site residue. Zn(2+) contacts are provided by histidine 191 and histidine 197. Ca(2+) is bound by residues arginine 266, aspartate 269, aspartate 298, glycine 300, glycine 301, aspartate 303, threonine 340, and glutamate 342. Hemolysin-type calcium-binding repeat units follow at residues 345-362 (IGGS…ANTL) and 363-380 (KGGA…ADNL).

The protein belongs to the peptidase M10B family. Requires Zn(2+) as cofactor. The cofactor is Ca(2+).

The protein resides in the secreted. It carries out the reaction Preferential cleavage of bonds with hydrophobic residues in P1'.. The polypeptide is Serralysin (prtA1) (Photorhabdus luminescens (Xenorhabdus luminescens)).